The following is a 663-amino-acid chain: MGRYRVRVVTGAWLFSGSLNLVRLWLVGEHREAKLELQLRPARGKEEEFDFDVPEDLGPLQFVKLHKQHTVVDDAWFCNLITVQGPGTSAEAVFPCYRWVQGEGILSLPEGTARLAGDNALDVFQKYREKELKERQQTYCWATWKEGLPQTIAADCKDDLPPNMRFHEEKRLDFEWTLKAGVLEMGLKRVYTLLRSWNHLEDFDQIFWGQKSALAEKVHQCWQEDELFGYQFLNGANPMLLRRSTSLPSRLVLPSGMEELQAQLEKELKNGSLFEADFILLDGIPANVIRGEPQYLAAPLVMLRMDPGGKLLPMAIQIQPPNPSSPAPTLFLPSDPPLAWLLAKIWVRNSDFQLQELQFHLLNTHLVAEVIAVATMRCLPGLHPIFKLLVPHIRYTMEINTRSRTQLISDGGIFDQVVSTGGGGHVQLLTRAVAQLTYHSLCPPDDLANRGLLRIPSALYARDALQLWEVTARYVKGMVHLFYQSDDIVRGDPELQAWCREITEVGLCHAQDRGFPVSFQSRAQLCHFLTMCVFTCTAQHAAINQGQLDWYGWVPNAPCTMRMPPPTSKDDVTMETVMGSLPDVQKACLQMTITWHLGRLQPDMVPLGHHTEKYFSDPRTKAVLSQFQADLDNLEKEITARNEQLDLPYEYLKPSRIENSITI.

Residues 2-114 (GRYRVRVVTG…ILSLPEGTAR (113 aa)) form the PLAT domain. The 549-residue stretch at 115-663 (LAGDNALDVF…PSRIENSITI (549 aa)) folds into the Lipoxygenase domain. S246 bears the Phosphoserine mark. Fe cation is bound by residues H360, H365, H540, N544, and I663.

It belongs to the lipoxygenase family. Fe cation is required as a cofactor. As to expression, found primarily in platelets and in microsomal and cytosolic fractions of the epidermis (at protein level).

The protein localises to the cytoplasm. The protein resides in the cytosol. It is found in the membrane. It catalyses the reaction (5Z,8Z,11Z,14Z)-eicosatetraenoate + O2 = (12S)-hydroperoxy-(5Z,8Z,10E,14Z)-eicosatetraenoate. It carries out the reaction (9Z,12Z)-octadecadienoate + O2 = (13S)-hydroperoxy-(9Z,11E)-octadecadienoate. The catalysed reaction is 2 leukotriene A4 + O2 + 2 H2O = 2 lipoxin A4. The enzyme catalyses 2 leukotriene A4 + O2 + 2 H2O = 2 lipoxin B4. It catalyses the reaction (5Z,8Z,11Z)-eicosatrienoate + O2 = (12S)-hydroperoxy-(5Z,8Z,10E)-eicosatrienoate. It carries out the reaction (8Z,11Z,14Z)-eicosatrienoate + O2 = (12S)-hydroperoxy-(8Z,10E,14Z)-eicosatrienoate. The catalysed reaction is (4Z,7Z,10Z,13Z,16Z,19Z)-docosahexaenoate + O2 = (14S)-hydroperoxy-(4Z,7Z,10Z,12E,16Z,19Z)-docosahexaenoate. The enzyme catalyses (7S)-hydroperoxy-(4Z,8E,10Z,13Z,16Z,19Z)-docosahexaenoate + O2 = (7S,14S)-dihydroperoxy-(4Z,8E,10Z,12E,16Z,19Z)-docosahexaenoate. It catalyses the reaction (7S)-hydroperoxy-(4Z,8E,10Z,13Z,16Z,19Z)-docosahexaenoate + O2 = (7S,17S)-dihydroperoxy-(4Z,8E,10Z,13Z,15E,19Z)-docosahexaenoate. It carries out the reaction (14R,15S)-epoxy-(5Z,8Z,11Z)-eicosatrienoate + O2 = (12S)-hydroperoxy-(14R,15S)-epoxy-(5Z,8Z,10E)-eicosatrienoate. The catalysed reaction is (14S,15R)-epoxy-(5Z,8Z,11Z)-eicosatrienoate + O2 = (12S)-hydroperoxy-(14S,15R)-epoxy-(5Z,8Z,10E)-eicosatrienoate. The enzyme catalyses (5Z,8Z,11Z,14Z)-eicosatetraenoate + O2 = (15S)-hydroperoxy-(5Z,8Z,11Z,13E)-eicosatetraenoate. It catalyses the reaction (14S)-hydroperoxy-(4Z,7Z,10Z,12E,16Z,19Z)-docosahexaenoate = (13S,14S)-epoxy-(4Z,7Z,9E,11E,16Z,19Z)-docosahexaenoate + H2O. It carries out the reaction N-(5Z,8Z,11Z,14Z)-eicosatetraenoyl-L-alanine + O2 = N-(15S)-hydroperoxy-(5Z,8Z,11Z,13E)-eicosatetraenoyl-alanine. The catalysed reaction is N-(5Z,8Z,11Z,14Z)-eicosatetraenoyl-L-alanine + O2 = N-(12S)-hydroperoxy-(5Z,8Z,10E,14Z)-eicosatetraenoyl-alanine. The enzyme catalyses N-(5Z,8Z,11Z,14Z)-eicosatetraenoyl-gamma-aminobutanoate + O2 = N-(15S)-hydroperoxy-(5Z,8Z,11Z,13E)-eicosatetraenoyl-gamma-aminobutanoate. It catalyses the reaction N-(5Z,8Z,11Z,14Z)-eicosatetraenoyl-gamma-aminobutanoate + O2 = N-(12S)-hydroperoxy-(5Z,8Z,10E,14Z)-eicosatetraenoyl-gamma-aminobutanoate. It carries out the reaction N-(5Z,8Z,11Z,14Z)-eicosatetraenoyl-glycine + O2 = N-(15S)-hydroperoxy-(5Z,8Z,11Z,13E)-eicosatetraenoyl-glycine. The catalysed reaction is N-(5Z,8Z,11Z,14Z)-eicosatetraenoyl-glycine + O2 = N-(12S)-hydroperoxy-(5Z,8Z,10E,14Z)-eicosatetraenoyl-glycine. The enzyme catalyses N-(5Z,8Z,11Z,14Z)-eicosatetraenoyl-taurine + O2 = N-(12S)-hydroperoxy-(5Z,8Z,10E,14Z)-eicosatetraenoyl-taurine. It catalyses the reaction N-(5Z,8Z,11Z,14Z)-eicosatetraenoyl-taurine + O2 = N-(15S)-hydroperoxy-(5Z,8Z,11Z,13E)-eicosatetraenoyl-taurine. It carries out the reaction (5Z,8Z,11Z,14Z,17Z)-eicosapentaenoate + O2 = (12S)-hydroperoxy-(5Z,8Z,10E,14Z,17Z)-eicosapentaenoate. Its pathway is lipid metabolism; hydroperoxy eicosatetraenoic acid biosynthesis. With respect to regulation, activated by EGF. Arachidonic acid conversion is inhibited by (13S,14S)-epoxy-(4Z,7Z,9E,11E,16Z,19Z)-docosahexaenoate (13S,14S-epoxy-DHA). Arachidonate 12-lipoxygenase activity is decreased when PH decreases from 7.4 to 6. In terms of biological role, catalyzes the regio and stereo-specific incorporation of molecular oxygen into free and esterified polyunsaturated fatty acids generating lipid hydroperoxides that can be further reduced to the corresponding hydroxy species. Mainly converts arachidonate ((5Z,8Z,11Z,14Z)-eicosatetraenoate) to the specific bioactive lipid (12S)-hydroperoxyeicosatetraenoate/(12S)-HPETE. Through the production of bioactive lipids like (12S)-HPETE it regulates different biological processes including platelet activation. It can also catalyze the epoxidation of double bonds of polyunsaturated fatty acids such as (14S)-hydroperoxy-docosahexaenoate/(14S)-HPDHA resulting in the formation of (13S,14S)-epoxy-DHA. Furthermore, it may participate in the sequential oxidations of DHA ((4Z,7Z,10Z,13Z,16Z,19Z)-docosahexaenoate) to generate specialized pro-resolving mediators (SPMs) like resolvin D5 ((7S,17S)-diHPDHA) and (7S,14S)-diHPDHA, that actively down-regulate the immune response and have anti-aggregation properties with platelets. An additional function involves a multistep process by which it transforms leukotriene A4/LTA4 into the bioactive lipids lipoxin A4/LXA4 and lipoxin B4/LXB4, both are vasoactive and LXA4 may regulate neutrophil function via occupancy of specific recognition sites. Can also peroxidize linoleate ((9Z,12Z)-octadecadienoate) to (13S)-hydroperoxyoctadecadienoate/ (13S-HPODE). Due to its role in regulating both the expression of the vascular endothelial growth factor (VEGF, an angiogenic factor involved in the survival and metastasis of solid tumors) and the expression of integrin beta-1 (known to affect tumor cell migration and proliferation), it can be regarded as protumorigenic. Important for cell survival, as it may play a role not only in proliferation but also in the prevention of apoptosis in vascular smooth muscle cells. The polypeptide is Polyunsaturated fatty acid lipoxygenase ALOX12 (Alox12) (Mus musculus (Mouse)).